Reading from the N-terminus, the 551-residue chain is HTH-type transcriptional regulator SgrR (551 aa).

Positions 1-116 constitute an HTH marR-type domain; sequence MPSARLQQQF…LVSHLGRSFR (116 aa). Residues 26–49 constitute a DNA-binding region (H-T-H motif); that stretch reads LNELAALLSCSRRHMRTLLNTMQD. The interval 163–492 is solute-binding; that stretch reads ELEADIAHHW…IDWQADAARW (330 aa).

Functionally, activates the small RNA gene sgrS under glucose-phosphate stress conditions as well as yfdZ. Represses its own transcription under both stress and non-stress conditions. Might act as a sensor of the intracellular accumulation of phosphoglucose by binding these molecules in its C-terminal solute-binding domain. The sequence is that of HTH-type transcriptional regulator SgrR from Shigella sonnei (strain Ss046).